Here is a 319-residue protein sequence, read N- to C-terminus: tRNA dimethylallyltransferase (319 aa).

26–33 (GPTAAGKS) is an ATP binding site. 28 to 33 (TAAGKS) serves as a coordination point for substrate. The interaction with substrate tRNA stretch occupies residues 51–54 (DSMQ).

It belongs to the IPP transferase family. Monomer. Requires Mg(2+) as cofactor.

It carries out the reaction adenosine(37) in tRNA + dimethylallyl diphosphate = N(6)-dimethylallyladenosine(37) in tRNA + diphosphate. Catalyzes the transfer of a dimethylallyl group onto the adenine at position 37 in tRNAs that read codons beginning with uridine, leading to the formation of N6-(dimethylallyl)adenosine (i(6)A). The polypeptide is tRNA dimethylallyltransferase (Salinispora tropica (strain ATCC BAA-916 / DSM 44818 / JCM 13857 / NBRC 105044 / CNB-440)).